The following is a 323-amino-acid chain: DNA repair and recombination protein RadA (323 aa).

114 to 121 contributes to the ATP binding site; the sequence is GEFGSGKT.

The protein belongs to the eukaryotic RecA-like protein family.

In terms of biological role, involved in DNA repair and in homologous recombination. Binds and assemble on single-stranded DNA to form a nucleoprotein filament. Hydrolyzes ATP in a ssDNA-dependent manner and promotes DNA strand exchange between homologous DNA molecules. This Picrophilus torridus (strain ATCC 700027 / DSM 9790 / JCM 10055 / NBRC 100828 / KAW 2/3) protein is DNA repair and recombination protein RadA.